The following is a 377-amino-acid chain: Histone deacetylase 8 (377 aa).

Positions 14–324 are histone deacetylase; it reads LPPVYIYSPE…WTYLTGVILG (311 aa). Ser-39 carries the post-translational modification Phosphoserine. Asp-101 contributes to the substrate binding site. Residue His-143 is the Proton acceptor of the active site. Residue Gly-151 coordinates substrate. The a divalent metal cation site is built by Asp-178, His-180, and Asp-267. Tyr-306 provides a ligand contact to substrate.

It belongs to the histone deacetylase family. HD type 1 subfamily. As to quaternary structure, interacts with CBFA2T3. Interacts with phosphorylated SMG5/EST1B; this interaction protects SMG5 from ubiquitin-mediated degradation. Associates with alpha-SMA (smooth muscle alpha-actin). It depends on a divalent metal cation as a cofactor. In terms of processing, phosphorylated by PKA on serine 39. Phosphorylation reduces deacetylase activity observed preferentially on histones H3 and H4.

It is found in the nucleus. The protein resides in the chromosome. It localises to the cytoplasm. The catalysed reaction is N(6)-acetyl-L-lysyl-[histone] + H2O = L-lysyl-[histone] + acetate. It catalyses the reaction N(6)-acetyl-L-lysyl-[protein] + H2O = L-lysyl-[protein] + acetate. The enzyme catalyses N(6)-(2E)-butenoyl-L-lysyl-[protein] + H2O = (2E)-2-butenoate + L-lysyl-[protein]. With respect to regulation, its activity is inhibited by trichostatin A (TSA) and butyrate, 2 well known histone deacetylase inhibitors. histone deacetylase inhibitor. In terms of biological role, histone deacetylase that catalyzes the deacetylation of lysine residues on the N-terminal part of the core histones (H2A, H2B, H3 and H4). Histone deacetylation gives a tag for epigenetic repression and plays an important role in transcriptional regulation, cell cycle progression and developmental events. Histone deacetylases act via the formation of large multiprotein complexes. Also involved in the deacetylation of cohesin complex protein SMC3 regulating release of cohesin complexes from chromatin. May play a role in smooth muscle cell contractility. In addition to protein deacetylase activity, also has protein-lysine deacylase activity: acts as a protein decrotonylase by mediating decrotonylation ((2E)-butenoyl) of histones. This Mus musculus (Mouse) protein is Histone deacetylase 8 (Hdac8).